We begin with the raw amino-acid sequence, 193 residues long: Recombination protein RecR (193 aa).

Residues 61–76 (CSSCNALSESEVCEIC) form a C4-type zinc finger. One can recognise a Toprim domain in the interval 84–170 (SQLCMVLHPR…TFTKIAQGVP (87 aa)).

Belongs to the RecR family.

May play a role in DNA repair. It seems to be involved in an RecBC-independent recombinational process of DNA repair. It may act with RecF and RecO. This is Recombination protein RecR from Helicobacter pylori (strain G27).